The primary structure comprises 389 residues: GTPase Obg (389 aa).

One can recognise an Obg domain in the interval 1–159 (MKFVDEAVIR…RSLKLELMLL (159 aa)). Residues 122–144 (FHGLGNTRFKSSTNRAPRQKTLG) form a disordered region. In terms of domain architecture, OBG-type G spans 160–333 (ADVGLLGMPN…LSLKLIDFIE (174 aa)). GTP is bound by residues 166–173 (GMPNAGKS), 191–195 (FTTLV), 213–216 (DIPG), 283–286 (NKTD), and 314–316 (SAY). Residues serine 173 and threonine 193 each coordinate Mg(2+).

This sequence belongs to the TRAFAC class OBG-HflX-like GTPase superfamily. OBG GTPase family. In terms of assembly, monomer. Mg(2+) serves as cofactor.

It localises to the cytoplasm. In terms of biological role, an essential GTPase which binds GTP, GDP and possibly (p)ppGpp with moderate affinity, with high nucleotide exchange rates and a fairly low GTP hydrolysis rate. Plays a role in control of the cell cycle, stress response, ribosome biogenesis and in those bacteria that undergo differentiation, in morphogenesis control. This is GTPase Obg from Shewanella woodyi (strain ATCC 51908 / MS32).